The sequence spans 593 residues: V-type ATP synthase alpha chain (593 aa).

246–253 (GPFGAGKT) is an ATP binding site.

Belongs to the ATPase alpha/beta chains family.

It catalyses the reaction ATP + H2O + 4 H(+)(in) = ADP + phosphate + 5 H(+)(out). Functionally, produces ATP from ADP in the presence of a proton gradient across the membrane. The V-type alpha chain is a catalytic subunit. The chain is V-type ATP synthase alpha chain from Protochlamydia amoebophila (strain UWE25).